The chain runs to 769 residues: Scarecrow-like protein 14 (769 aa).

4 disordered regions span residues 1–23 (MGSY…DFDL), 128–157 (PSSS…GAFS), 279–320 (TEKK…ERSN), and 364–388 (TAQS…DSKK). The GRAS domain maps to 384 to 765 (NDSKKETADL…RIVYASSLWV (382 aa)). Residues 391-451 (ADLRTLLVLC…EARLAGTGTQ (61 aa)) are leucine repeat I (LRI). The segment at 470–536 (YQTYMSVCPF…GGSPKLRITG (67 aa)) is VHIID. The VHIID motif lies at 501 to 505 (IHIID). The leucine repeat II (LRII) stretch occupies residues 552-584 (ETGHRLARYCQRHNVPFEYNAIAQKWETIQVED). The PFYRE stretch occupies residues 593 to 687 (VVVNSLFRFR…KEFYGREIVN (95 aa)). Residues 690-765 (ACEGTERVER…RIVYASSLWV (76 aa)) are SAW.

This sequence belongs to the GRAS family. In terms of tissue distribution, expressed in roots, shoots, flowers and siliques.

The protein resides in the nucleus. Its function is as follows. Probable transcription factor involved in plant development. The sequence is that of Scarecrow-like protein 14 (SCL14) from Arabidopsis thaliana (Mouse-ear cress).